The primary structure comprises 57 residues: uncharacterized protein (57 aa).

A helical membrane pass occupies residues 34–54 (AALLDAAALVVIPGLLTAAAV).

The protein localises to the membrane. This is an uncharacterized protein from Dictyostelium discoideum (Social amoeba).